A 179-amino-acid chain; its full sequence is Tetratricopeptide repeat protein 36 (179 aa).

3 TPR repeats span residues 43–76, 77–110, and 115–148; these read SSQLEREAVRLAESMNVTDAIEKFTEAIQVCPLN, PSAYNNRAQAYRLQNSPEKALEDLNESLRLAGPK, and CQAYVQRASIYRLQGDDEKARADFAAAAELGSSF.

The protein belongs to the TTC36 family.

The chain is Tetratricopeptide repeat protein 36 from Caenorhabditis briggsae.